Consider the following 276-residue polypeptide: MPIDSLPPLREVINTYGLQAHKSLGQNFLFDLNLTSKIAHQAGNIEGKPVIEVGPGPGGLTRALLAKGAIVTAIERDERCIPALLEIEKHYPQKLKIICNDALKQDFSKLFEISPEKPRIIANLPYNIGTQLLLNWLLAEPWPPFYESMTLMFQREVAQRITAKPQSAHYGRLSVLTGWRTIAKIAFDVPPQAFIPAPKITSSVVHIIPRTQPLTCSAQKLSFVTKTAFGQRRKMLRQNLKTLGGEVLLEKAGIDETRRAETLEISEFVTLANLVI.

6 residues coordinate S-adenosyl-L-methionine: Asn27, Leu29, Gly54, Glu75, Asp101, and Asn123.

The protein belongs to the class I-like SAM-binding methyltransferase superfamily. rRNA adenine N(6)-methyltransferase family. RsmA subfamily.

It is found in the cytoplasm. It carries out the reaction adenosine(1518)/adenosine(1519) in 16S rRNA + 4 S-adenosyl-L-methionine = N(6)-dimethyladenosine(1518)/N(6)-dimethyladenosine(1519) in 16S rRNA + 4 S-adenosyl-L-homocysteine + 4 H(+). Its function is as follows. Specifically dimethylates two adjacent adenosines (A1518 and A1519) in the loop of a conserved hairpin near the 3'-end of 16S rRNA in the 30S particle. May play a critical role in biogenesis of 30S subunits. This Bartonella henselae (strain ATCC 49882 / DSM 28221 / CCUG 30454 / Houston 1) (Rochalimaea henselae) protein is Ribosomal RNA small subunit methyltransferase A.